The following is a 79-amino-acid chain: Conotoxin VnMEKL-024 (79 aa).

An N-terminal signal peptide occupies residues 1 to 19 (MQKLTILLLVAAVLMSTQA). Residues 20–50 (LIRGGVEKRQEAKRNFFSKRKTTAESWWEGE) constitute a propeptide that is removed on maturation. Cystine bridges form between C51-C65, C58-C69, and C64-C76.

Belongs to the conotoxin O2 superfamily. As to expression, expressed by the venom duct.

It localises to the secreted. The sequence is that of Conotoxin VnMEKL-024 from Conus ventricosus (Mediterranean cone).